The chain runs to 167 residues: Lipoprotein signal peptidase (167 aa).

3 consecutive transmembrane segments (helical) span residues 12–32, 68–88, and 99–119; these read WLWL…AVVK, WQRW…IHWL, and GIAY…RLVL. Residues Asp124 and Asp142 contribute to the active site. The chain crosses the membrane as a helical span at residues 137–157; that stretch reads AFNLADSFIFIGAAMIVLDGF.

This sequence belongs to the peptidase A8 family.

The protein resides in the cell inner membrane. It catalyses the reaction Release of signal peptides from bacterial membrane prolipoproteins. Hydrolyzes -Xaa-Yaa-Zaa-|-(S,diacylglyceryl)Cys-, in which Xaa is hydrophobic (preferably Leu), and Yaa (Ala or Ser) and Zaa (Gly or Ala) have small, neutral side chains.. It functions in the pathway protein modification; lipoprotein biosynthesis (signal peptide cleavage). This protein specifically catalyzes the removal of signal peptides from prolipoproteins. In Aeromonas hydrophila subsp. hydrophila (strain ATCC 7966 / DSM 30187 / BCRC 13018 / CCUG 14551 / JCM 1027 / KCTC 2358 / NCIMB 9240 / NCTC 8049), this protein is Lipoprotein signal peptidase.